The following is a 702-amino-acid chain: Methionine--tRNA ligase (702 aa).

Positions 14–24 match the 'HIGH' region motif; that stretch reads PYANGPVHLGH. Cys-146, Cys-149, Cys-159, and Cys-162 together coordinate Zn(2+). A 'KMSKS' region motif is present at residues 344 to 348; that stretch reads KFSKS. Lys-347 lines the ATP pocket. The 102-residue stretch at 601–702 folds into the tRNA-binding domain; it reads DFLKVDLRVA…GDEINGQQIQ (102 aa).

Belongs to the class-I aminoacyl-tRNA synthetase family. MetG type 1 subfamily. In terms of assembly, homodimer. Zn(2+) is required as a cofactor.

Its subcellular location is the cytoplasm. It catalyses the reaction tRNA(Met) + L-methionine + ATP = L-methionyl-tRNA(Met) + AMP + diphosphate. Functionally, is required not only for elongation of protein synthesis but also for the initiation of all mRNA translation through initiator tRNA(fMet) aminoacylation. The polypeptide is Methionine--tRNA ligase (Chlorobium limicola (strain DSM 245 / NBRC 103803 / 6330)).